The chain runs to 69 residues: Putative membrane protein insertion efficiency factor (69 aa).

The protein belongs to the UPF0161 family.

Its subcellular location is the cell inner membrane. In terms of biological role, could be involved in insertion of integral membrane proteins into the membrane. The chain is Putative membrane protein insertion efficiency factor from Novosphingobium aromaticivorans (strain ATCC 700278 / DSM 12444 / CCUG 56034 / CIP 105152 / NBRC 16084 / F199).